Reading from the N-terminus, the 415-residue chain is Thyroxine-binding globulin (415 aa).

Positions 1–20 (MSPFLYLVLLVLGLHATIHC) are cleaved as a signal peptide. Residues Asn36, Asn99, Asn165, and Asn253 are each glycosylated (N-linked (GlcNAc...) asparagine). Thyroxine is bound by residues Asn293 and Arg398.

The protein belongs to the serpin family.

Its subcellular location is the secreted. In terms of biological role, major thyroid hormone transport protein in serum. In Pan troglodytes (Chimpanzee), this protein is Thyroxine-binding globulin (SERPINA7).